A 257-amino-acid chain; its full sequence is Exosome complex component mtr3 (257 aa).

The protein belongs to the RNase PH family. In terms of assembly, component of the RNA exosome complex. Specifically part of the catalytically inactive RNA exosome core complex (Exo-9) may associate with the catalytic subunits rrp6 and dis3 in cytoplasmic- and nuclear-specific RNA exosome complex forms. Exo-9 is formed by a hexameric base ring of RNase PH domain-containing subunits and a cap ring consisting of csl4, rrp4 and rrp40.

It is found in the cytoplasm. It localises to the nucleus. Its subcellular location is the nucleolus. In terms of biological role, non-catalytic component of the RNA exosome complex which has 3'-&gt;5' exoribonuclease activity and participates in a multitude of cellular RNA processing and degradation events. In the nucleus, the RNA exosome complex is involved in proper maturation of stable RNA species such as rRNA, snRNA and snoRNA, in the elimination of RNA processing by-products and non-coding 'pervasive' transcripts, such as antisense RNA species and cryptic unstable transcripts (CUTs), and of mRNAs with processing defects, thereby limiting or excluding their export to the cytoplasm. In the cytoplasm, the RNA exosome complex is involved in general mRNA turnover and in RNA surveillance pathways, preventing translation of aberrant mRNAs. The catalytic inactive RNA exosome core complex of 9 subunits (Exo-9) is proposed to play a pivotal role in the binding and presentation of RNA for ribonucleolysis, and to serve as a scaffold for the association with catalytic subunits and accessory proteins or complexes. ski6 is part of the hexameric ring of RNase PH domain-containing subunits proposed to form a central channel which threads RNA substrates for degradation. This Schizosaccharomyces pombe (strain 972 / ATCC 24843) (Fission yeast) protein is Exosome complex component mtr3 (mtr3).